A 108-amino-acid chain; its full sequence is Thiosulfate sulfurtransferase GlpE (108 aa).

The region spanning 17–105 (KDGSAALVDI…WARQYPQDVE (89 aa)) is the Rhodanese domain. Cysteine 65 functions as the Cysteine persulfide intermediate in the catalytic mechanism.

Belongs to the GlpE family.

It is found in the cytoplasm. The enzyme catalyses thiosulfate + hydrogen cyanide = thiocyanate + sulfite + 2 H(+). It catalyses the reaction thiosulfate + [thioredoxin]-dithiol = [thioredoxin]-disulfide + hydrogen sulfide + sulfite + 2 H(+). Functionally, transferase that catalyzes the transfer of sulfur from thiosulfate to thiophilic acceptors such as cyanide or dithiols. May function in a CysM-independent thiosulfate assimilation pathway by catalyzing the conversion of thiosulfate to sulfite, which can then be used for L-cysteine biosynthesis. The polypeptide is Thiosulfate sulfurtransferase GlpE (Serratia proteamaculans (strain 568)).